The primary structure comprises 540 residues: Beta-secretase (540 aa).

An N-terminal signal peptide occupies residues 1 to 31; that stretch reads MHFSLPTSRIVVVVPAAAICIVCVLIETCTA. Residues 81–435 form the Peptidase A1 domain; it reads YYIEVDIGTP…DRENKRVGFA (355 aa). Catalysis depends on residues Asp-99 and Asp-302. 3 disulfide bridges follow: Cys-222-Cys-439, Cys-291-Cys-469, and Cys-345-Cys-397. A helical membrane pass occupies residues 483-503; it reads ITAYVLAAICLVCLIPVIVFA. The Cytoplasmic portion of the chain corresponds to 504–540; the sequence is LTHQINKRCKGRRGRGVVNHHRLDQEGLAENEPNSDP.

The protein belongs to the peptidase A1 family.

Its subcellular location is the membrane. The chain is Beta-secretase from Strongylocentrotus purpuratus (Purple sea urchin).